Reading from the N-terminus, the 503-residue chain is Carboxyl-terminal PDZ ligand of neuronal nitric oxide synthase protein (503 aa).

The PID domain occupies 26 to 191; the sequence is FQHGISFEAK…ESERNSDGSG (166 aa). Positions 170–212 are disordered; that stretch reads HTQQNADGQEDGESERNSDGSGDPGRQLTGAERVSTATAEETD. Residues Ser-183, Ser-187, Ser-190, and Ser-262 each carry the phosphoserine modification. A disordered region spans residues 266-285; it reads LLPSSSSSKPPGLGTGTPLS. A coiled-coil region spans residues 319–360; it reads AAEAAARLEAQARVHQLLLQNKDMLQHISLLVKQVQELELKL. Phosphoserine occurs at positions 368, 371, 398, and 414. An interaction with NOS1 region spans residues 491 to 503; that stretch reads QELGDSLDDEIAV. Positions 501-503 match the PDZ-binding motif; that stretch reads IAV.

Interacts with the PDZ domain of NOS1 or the second PDZ domain of DLG4 through its C-terminus. Interacts with RASD1 and SYN1, SYN2 and SYN3 via its PID domain. Forms a ternary complex with NOS1 and RASD1. Forms a ternary complex with NOS1 and SYN1. Mainly expressed in brain. Highly expressed in accessory olfactory bulb, caudate-putamen, cerebellum, cerebral cortex, dentate gyrus of the hippocampus, islands of Calleja, olfactory bulb and supraoptic nucleus. Expressed in kidney glomeruli podocytes (at protein level).

Its subcellular location is the cell projection. The protein localises to the filopodium. It is found in the podosome. In terms of biological role, adapter protein involved in neuronal nitric-oxide (NO) synthesis regulation via its association with nNOS/NOS1. The complex formed with NOS1 and synapsins is necessary for specific NO and synapsin functions at a presynaptic level. Mediates an indirect interaction between NOS1 and RASD1 leading to enhance the ability of NOS1 to activate RASD1. Competes with DLG4 for interaction with NOS1, possibly affecting NOS1 activity by regulating the interaction between NOS1 and DLG4. In kidney podocytes, plays a role in podosomes and filopodia formation through CDC42 activation. This Rattus norvegicus (Rat) protein is Carboxyl-terminal PDZ ligand of neuronal nitric oxide synthase protein.